We begin with the raw amino-acid sequence, 249 residues long: Small ribosomal subunit protein eS6 (249 aa).

Disordered stretches follow at residues 161–181 (PLAK…RLVT) and 194–249 (LKKQ…SSQK). The segment covering 216 to 229 (RSKEAKEKRQEQIA) has biased composition (basic and acidic residues). S235, S236, S240, S244, and S247 each carry phosphoserine. A compositionally biased stretch (low complexity) spans 236–249 (SLRASTSKSESSQK).

Belongs to the eukaryotic ribosomal protein eS6 family. As to quaternary structure, component of the small ribosomal subunit. Part of the small subunit (SSU) processome, composed of more than 70 proteins and the RNA chaperone small nucleolar RNA (snoRNA) U3. Post-translationally, ribosomal protein S6 is the major substrate of protein kinases in eukaryote ribosomes. The phosphorylation is stimulated by growth factors, tumor promoting agents, and mitogens. It is dephosphorylated at growth arrest.

The protein resides in the cytoplasm. It localises to the nucleus. It is found in the nucleolus. Functionally, component of the 40S small ribosomal subunit. Plays an important role in controlling cell growth and proliferation through the selective translation of particular classes of mRNA. Part of the small subunit (SSU) processome, first precursor of the small eukaryotic ribosomal subunit. During the assembly of the SSU processome in the nucleolus, many ribosome biogenesis factors, an RNA chaperone and ribosomal proteins associate with the nascent pre-rRNA and work in concert to generate RNA folding, modifications, rearrangements and cleavage as well as targeted degradation of pre-ribosomal RNA by the RNA exosome. This Xenopus laevis (African clawed frog) protein is Small ribosomal subunit protein eS6 (rps6).